Consider the following 358-residue polypeptide: Mannonate dehydratase (358 aa).

Belongs to the mannonate dehydratase family. Requires Fe(2+) as cofactor. It depends on Mn(2+) as a cofactor.

It catalyses the reaction D-mannonate = 2-dehydro-3-deoxy-D-gluconate + H2O. The protein operates within carbohydrate metabolism; pentose and glucuronate interconversion. In terms of biological role, catalyzes the dehydration of D-mannonate. The sequence is that of Mannonate dehydratase from Shouchella clausii (strain KSM-K16) (Alkalihalobacillus clausii).